The sequence spans 206 residues: Nucleoside triphosphate pyrophosphatase (206 aa).

The Proton acceptor role is filled by Asp76.

The protein belongs to the Maf family. Requires a divalent metal cation as cofactor.

The protein resides in the cytoplasm. The catalysed reaction is a ribonucleoside 5'-triphosphate + H2O = a ribonucleoside 5'-phosphate + diphosphate + H(+). It catalyses the reaction a 2'-deoxyribonucleoside 5'-triphosphate + H2O = a 2'-deoxyribonucleoside 5'-phosphate + diphosphate + H(+). In terms of biological role, nucleoside triphosphate pyrophosphatase. May have a dual role in cell division arrest and in preventing the incorporation of modified nucleotides into cellular nucleic acids. This chain is Nucleoside triphosphate pyrophosphatase, found in Streptomyces coelicolor (strain ATCC BAA-471 / A3(2) / M145).